A 1210-amino-acid polypeptide reads, in one-letter code: Multimerin-1 (1210 aa).

The N-terminal stretch at methionine 1–arginine 19 is a signal peptide. Residues alanine 57 to lysine 102 are disordered. A compositionally biased stretch (low complexity) spans glutamine 80 to proline 92. A glycan (N-linked (GlcNAc...) asparagine) is linked at asparagine 133. Polar residues predominate over residues serine 143–serine 155. The segment at serine 143 to threonine 190 is disordered. An N-linked (GlcNAc...) asparagine glycan is attached at asparagine 161. Residues serine 163–arginine 176 show a composition bias toward basic and acidic residues. The segment covering asparagine 177–threonine 189 has biased composition (polar residues). One can recognise an EMI domain in the interval glycine 192–leucine 267. 3 disulfides stabilise this stretch: cysteine 196-cysteine 257, cysteine 222-cysteine 230, and cysteine 256-cysteine 265. O-linked (Fuc) threonine glycosylation occurs at threonine 201. Threonine 250 carries an O-linked (Fuc) threonine glycan. The disordered stretch occupies residues alanine 276 to cysteine 299. Positions alanine 303–asparagine 338 form a coiled coil. N-linked (GlcNAc...) asparagine glycans are attached at residues asparagine 328, asparagine 415, asparagine 491, asparagine 525, asparagine 560, asparagine 602, asparagine 712, asparagine 765, asparagine 810, asparagine 822, asparagine 903, asparagine 915, asparagine 963, and asparagine 1000. Residues leucine 564–glutamine 690 are a coiled coil. Positions phenylalanine 809–glycine 846 form a coiled coil. The 37-residue stretch at glutamate 1023 to threonine 1059 folds into the EGF-like domain. 3 disulfides stabilise this stretch: cysteine 1027–cysteine 1038, cysteine 1032–cysteine 1047, and cysteine 1049–cysteine 1058. Residue threonine 1037 is glycosylated (O-linked (Fuc) threonine). A C1q domain is found at arginine 1078–threonine 1210.

As to quaternary structure, multimeric. Composed of varying sized, disulfide-linked multimers, the smallest of which is a homotrimer. Proteolysis of the promultimerin in the N-terminal region, leads to the mature p155 form that is stored in platelets. Interacts with factor V/Va. In terms of processing, extensively N-glycosylated. O-fucosylated within the EMI domain (at Thr-201 and Thr-250) by FUT10/POFUT3 and FUT11/POFUT4. O-fucosylation at Thr-201 and Thr-1037 are required for facilitating protein folding and secretion.

The protein localises to the secreted. Functionally, carrier protein for platelet (but not plasma) factor V/Va. Plays a role in the storage and stabilization of factor V in platelets. Upon release following platelet activation, may limit platelet and plasma factor Va-dependent thrombin generation. Ligand for integrin alpha-IIb/beta-3 and integrin alpha-V/beta-3 on activated platelets, and may function as an extracellular matrix or adhesive protein. The chain is Multimerin-1 from Mus musculus (Mouse).